Reading from the N-terminus, the 235-residue chain is 2-C-methyl-D-erythritol 4-phosphate cytidylyltransferase (235 aa).

It belongs to the IspD/TarI cytidylyltransferase family. IspD subfamily.

The enzyme catalyses 2-C-methyl-D-erythritol 4-phosphate + CTP + H(+) = 4-CDP-2-C-methyl-D-erythritol + diphosphate. It participates in isoprenoid biosynthesis; isopentenyl diphosphate biosynthesis via DXP pathway; isopentenyl diphosphate from 1-deoxy-D-xylulose 5-phosphate: step 2/6. Its function is as follows. Catalyzes the formation of 4-diphosphocytidyl-2-C-methyl-D-erythritol from CTP and 2-C-methyl-D-erythritol 4-phosphate (MEP). This is 2-C-methyl-D-erythritol 4-phosphate cytidylyltransferase from Pseudomonas fluorescens (strain ATCC BAA-477 / NRRL B-23932 / Pf-5).